The sequence spans 314 residues: Ribosomal RNA small subunit methyltransferase H (314 aa).

Residues 32–34 (GGH), Asp-52, Phe-79, Asp-100, and Gln-107 each bind S-adenosyl-L-methionine.

The protein belongs to the methyltransferase superfamily. RsmH family.

It is found in the cytoplasm. It carries out the reaction cytidine(1402) in 16S rRNA + S-adenosyl-L-methionine = N(4)-methylcytidine(1402) in 16S rRNA + S-adenosyl-L-homocysteine + H(+). In terms of biological role, specifically methylates the N4 position of cytidine in position 1402 (C1402) of 16S rRNA. The polypeptide is Ribosomal RNA small subunit methyltransferase H (Shouchella clausii (strain KSM-K16) (Alkalihalobacillus clausii)).